The primary structure comprises 396 residues: S-adenosylmethionine synthase (396 aa).

Residue histidine 16 coordinates ATP. Aspartate 18 contributes to the Mg(2+) binding site. Residue glutamate 44 coordinates K(+). Positions 57 and 100 each coordinate L-methionine. A flexible loop region spans residues 100-110; the sequence is QSQDIARGVDN. ATP-binding positions include 162–164, aspartate 237, 243–244, alanine 260, and lysine 264; these read DGK and RK. Aspartate 237 contacts L-methionine. Lysine 268 is a binding site for L-methionine.

It belongs to the AdoMet synthase family. In terms of assembly, homotetramer; dimer of dimers. Mg(2+) serves as cofactor. The cofactor is K(+).

The protein resides in the cytoplasm. It catalyses the reaction L-methionine + ATP + H2O = S-adenosyl-L-methionine + phosphate + diphosphate. The protein operates within amino-acid biosynthesis; S-adenosyl-L-methionine biosynthesis; S-adenosyl-L-methionine from L-methionine: step 1/1. Functionally, catalyzes the formation of S-adenosylmethionine (AdoMet) from methionine and ATP. The overall synthetic reaction is composed of two sequential steps, AdoMet formation and the subsequent tripolyphosphate hydrolysis which occurs prior to release of AdoMet from the enzyme. This chain is S-adenosylmethionine synthase, found in Myxococcus xanthus.